Here is a 247-residue protein sequence, read N- to C-terminus: MEYHPDLENLDEDGYTQLHFDSQSNTRIAVVSEKGSCAASPPWRLIAVILGILCLVILVIAVVLGTMAIWRSNSGSNTLENGYFLSRNKENHSQPTQSSLEDSVTPTKAVKTTGVLSSPCPPNWIIYEKSCYLFSMSLNSWDGSKRQCWQLGSNLLKIDSSNELGFIVKQVSSQPDNSFWIGLSRPQTEVPWLWEDGSTFSSNLFQIRTTATQENPSPNCVWIHVSVIYDQLCSVPSYSICEKKFSM.

The Cytoplasmic portion of the chain corresponds to 1-44; the sequence is MEYHPDLENLDEDGYTQLHFDSQSNTRIAVVSEKGSCAASPPWR. The short motif at 15 to 18 is the ITAM-like element; sequence YTQL. The chain crosses the membrane as a helical; Signal-anchor for type II membrane protein span at residues 45 to 65; that stretch reads LIAVILGILCLVILVIAVVLG. The Extracellular segment spans residues 66–247; sequence TMAIWRSNSG…YSICEKKFSM (182 aa). Asn91 carries N-linked (GlcNAc...) asparagine glycosylation. Intrachain disulfides connect Cys120–Cys131, Cys148–Cys241, and Cys220–Cys233. In terms of domain architecture, C-type lectin spans 127 to 242; the sequence is YEKSCYLFSM…CSVPSYSICE (116 aa). 146-153 contributes to the (1,3-beta-D-glucosyl)n binding site; it reads RQCWQLGS. Residues Lys157, Asp159, and Glu163 each contribute to the a divalent metal cation site. A (1,3-beta-D-glucosyl)n-binding site is contributed by Glu195. Residue Glu242 participates in a divalent metal cation binding.

Homodimer. Interacts with SYK; participates in leukocyte activation in presence of fungal pathogens. Interacts with CD37; this interaction controls CLEC7A-mediated IL-6 production. As to quaternary structure, interacts with RANBP9. Post-translationally, phosphorylated on tyrosine residues in response to beta-glucan binding. In terms of tissue distribution, highly expressed in peripheral blood leukocytes and dendritic cells. Detected in spleen, bone marrow, lung, muscle, stomach and placenta.

It is found in the cell membrane. It localises to the cytoplasm. In terms of biological role, lectin that functions as a pattern recognizing receptor (PRR) specific for beta-1,3-linked and beta-1,6-linked glucans, which constitute cell wall constituents from pathogenic bacteria and fungi. Necessary for the TLR2-mediated inflammatory response and activation of NF-kappa-B: upon beta-glucan binding, recruits SYK via its ITAM motif and promotes a signaling cascade that activates some CARD domain-BCL10-MALT1 (CBM) signalosomes, leading to the activation of NF-kappa-B and MAP kinase p38 (MAPK11, MAPK12, MAPK13 and/or MAPK14) pathways which stimulate expression of genes encoding pro-inflammatory cytokines and chemokines. Enhances cytokine production in macrophages and dendritic cells. Mediates production of reactive oxygen species in the cell. Mediates phagocytosis of C.albicans conidia. Binds T-cells in a way that does not involve their surface glycans and plays a role in T-cell activation. Stimulates T-cell proliferation. Induces phosphorylation of SCIMP after binding beta-glucans. The protein is C-type lectin domain family 7 member A of Homo sapiens (Human).